A 141-amino-acid polypeptide reads, in one-letter code: 6,7-dimethyl-8-ribityllumazine synthase (141 aa).

Residues F13, 45–47, and 69–71 each bind 5-amino-6-(D-ribitylamino)uracil; these read SFE and AII. 74-75 contributes to the (2S)-2-hydroxy-3-oxobutyl phosphate binding site; that stretch reads DT. Catalysis depends on H77, which acts as the Proton donor. Residue L102 coordinates 5-amino-6-(D-ribitylamino)uracil. R117 contributes to the (2S)-2-hydroxy-3-oxobutyl phosphate binding site.

The protein belongs to the DMRL synthase family.

It carries out the reaction (2S)-2-hydroxy-3-oxobutyl phosphate + 5-amino-6-(D-ribitylamino)uracil = 6,7-dimethyl-8-(1-D-ribityl)lumazine + phosphate + 2 H2O + H(+). The protein operates within cofactor biosynthesis; riboflavin biosynthesis; riboflavin from 2-hydroxy-3-oxobutyl phosphate and 5-amino-6-(D-ribitylamino)uracil: step 1/2. In terms of biological role, catalyzes the formation of 6,7-dimethyl-8-ribityllumazine by condensation of 5-amino-6-(D-ribitylamino)uracil with 3,4-dihydroxy-2-butanone 4-phosphate. This is the penultimate step in the biosynthesis of riboflavin. This chain is 6,7-dimethyl-8-ribityllumazine synthase, found in Methanopyrus kandleri (strain AV19 / DSM 6324 / JCM 9639 / NBRC 100938).